The following is a 535-amino-acid chain: Cytochrome P450 monooxygenase atE (535 aa).

Cysteine 455 contacts heme.

The protein belongs to the cytochrome P450 family. Heme is required as a cofactor.

It carries out the reaction 3-methylcatechol + AH2 + O2 = 3-methylbenzene-1,2,4-triol + A + H2O. It participates in secondary metabolite biosynthesis. Cytochrome P450 monooxygenase; part of the gene cluster that mediates the biosynthesis of terreic acid, a quinone epoxide inhibitor of Bruton's tyrosine kinase. The first step of the pathway is the synthesis of 6-methylsalicylic acid (6-MSA) by the 6-methylsalicylic acid synthase atX. In the biosynthesis of 6-MSA, atX utilizes one acetyl-CoA and three malonyl-CoAs as its substrates and catalyzes a series of programmed reactions including Claisen condensation, reduction, aldol cyclization, and the hydrolytic cleavage that yields 6-MSA. The 6-methylsalicylate 1-monooxygenase atA then catalyzes the decarboxylative hydroxylation of 6-MSA to 3-methylcatechol. The next step is the conversion of 3-methylcatechol to 3-methyl-1,2,4-benzenetriol by cytochrome P450 monooxygenase atE, which is enhanced by cytochrome P450 monooxygenase atG. Then, the epoxidase atD catalyzes the epoxidation and hydroxyl oxidation of 3-methyl-1,2,4-benzenetriol to terremutin. Lastly, GMC oxidoreductase atC oxidizes terremutin to terreic acid. This chain is Cytochrome P450 monooxygenase atE, found in Aspergillus terreus (strain NIH 2624 / FGSC A1156).